The following is a 755-amino-acid chain: Anaphase-promoting complex subunit 5 (755 aa).

Position 195 is a phosphoserine (S195). TPR repeat units follow at residues 209–249, 250–300, 301–337, 338–378, 379–418, 419–466, 467–500, 501–540, 541–580, 581–620, 621–660, 661–696, and 697–736; these read QKQA…FNPD, FAEA…GRSL, RYAA…SNDH, VCLQ…YLAS, LGIQ…SELI, DISI…TESF, AVAL…FPPN, SQHA…ALNS, IEGV…TEMV, ISVL…QYLA, SETV…ILDK, GRAM…NLNE, and AKNY…CAML. At T232 the chain carries Phosphothreonine.

This sequence belongs to the APC5 family. In terms of assembly, the mammalian APC/C is composed at least of 14 distinct subunits ANAPC1, ANAPC2, CDC27/APC3, ANAPC4, ANAPC5, CDC16/APC6, ANAPC7, CDC23/APC8, ANAPC10, ANAPC11, CDC26/APC12, ANAPC13, ANAPC15 and ANAPC16 that assemble into a complex of at least 19 chains with a combined molecular mass of around 1.2 MDa; APC/C interacts with FZR1 and FBXO5.

The protein localises to the nucleus. It localises to the cytoplasm. Its subcellular location is the cytoskeleton. The protein resides in the spindle. Its pathway is protein modification; protein ubiquitination. Component of the anaphase promoting complex/cyclosome (APC/C), a cell cycle-regulated E3 ubiquitin ligase that controls progression through mitosis and the G1 phase of the cell cycle. The APC/C complex acts by mediating ubiquitination and subsequent degradation of target proteins: it mainly mediates the formation of 'Lys-11'-linked polyubiquitin chains and, to a lower extent, the formation of 'Lys-48'- and 'Lys-63'-linked polyubiquitin chains. The APC/C complex catalyzes assembly of branched 'Lys-11'-/'Lys-48'-linked branched ubiquitin chains on target proteins. The sequence is that of Anaphase-promoting complex subunit 5 (ANAPC5) from Homo sapiens (Human).